A 195-amino-acid chain; its full sequence is ATP-dependent Clp protease proteolytic subunit (195 aa).

Residue S94 is the Nucleophile of the active site. The active site involves H119.

Belongs to the peptidase S14 family. Component of the chloroplastic Clp protease core complex.

It localises to the plastid. Its subcellular location is the chloroplast stroma. The catalysed reaction is Hydrolysis of proteins to small peptides in the presence of ATP and magnesium. alpha-casein is the usual test substrate. In the absence of ATP, only oligopeptides shorter than five residues are hydrolyzed (such as succinyl-Leu-Tyr-|-NHMec, and Leu-Tyr-Leu-|-Tyr-Trp, in which cleavage of the -Tyr-|-Leu- and -Tyr-|-Trp bonds also occurs).. Functionally, cleaves peptides in various proteins in a process that requires ATP hydrolysis. Has a chymotrypsin-like activity. Plays a major role in the degradation of misfolded proteins. This chain is ATP-dependent Clp protease proteolytic subunit, found in Cycas taitungensis (Prince sago).